The sequence spans 154 residues: Endoribonuclease YbeY (154 aa).

The Zn(2+) site is built by histidine 113, histidine 117, and histidine 123.

Belongs to the endoribonuclease YbeY family. Requires Zn(2+) as cofactor.

The protein localises to the cytoplasm. In terms of biological role, single strand-specific metallo-endoribonuclease involved in late-stage 70S ribosome quality control and in maturation of the 3' terminus of the 16S rRNA. This is Endoribonuclease YbeY from Vibrio cholerae serotype O1 (strain ATCC 39315 / El Tor Inaba N16961).